Consider the following 313-residue polypeptide: Porphobilinogen deaminase (313 aa).

Cysteine 242 carries the S-(dipyrrolylmethanemethyl)cysteine modification.

This sequence belongs to the HMBS family. Monomer. The cofactor is dipyrromethane.

The catalysed reaction is 4 porphobilinogen + H2O = hydroxymethylbilane + 4 NH4(+). It functions in the pathway porphyrin-containing compound metabolism; protoporphyrin-IX biosynthesis; coproporphyrinogen-III from 5-aminolevulinate: step 2/4. In terms of biological role, tetrapolymerization of the monopyrrole PBG into the hydroxymethylbilane pre-uroporphyrinogen in several discrete steps. In Escherichia fergusonii (strain ATCC 35469 / DSM 13698 / CCUG 18766 / IAM 14443 / JCM 21226 / LMG 7866 / NBRC 102419 / NCTC 12128 / CDC 0568-73), this protein is Porphobilinogen deaminase.